A 121-amino-acid polypeptide reads, in one-letter code: Met-lysine-1a (121 aa).

The signal sequence occupies residues methionine 1–serine 22. Residues aspartate 23–arginine 69 constitute a propeptide that is removed on maturation. A Methionine amide modification is found at methionine 120.

In terms of tissue distribution, expressed by the venom gland.

The protein resides in the secreted. Shows no antimicrobial activity against Gram-positive bacterium B.subtilis B-501 or Gram-negative bacterium E.coli DH5-alpha at concentrations up to 20 ug/ml. Shows no toxicity towards insect (S.carnaria) larvae. The chain is Met-lysine-1a from Lachesana tarabaevi (Spider).